The chain runs to 232 residues: Uridylate kinase (232 aa).

13–14 (GS) serves as a coordination point for ATP. Position 52 (G52) interacts with UMP. ATP is bound by residues G53 and R57. UMP is bound by residues D74 and 122-128 (LQPGQST). T147, Y153, and D156 together coordinate ATP.

It belongs to the UMP kinase family. In terms of assembly, homohexamer.

The protein resides in the cytoplasm. It catalyses the reaction UMP + ATP = UDP + ADP. It participates in pyrimidine metabolism; CTP biosynthesis via de novo pathway; UDP from UMP (UMPK route): step 1/1. Its activity is regulated as follows. Inhibited by UTP. Functionally, catalyzes the reversible phosphorylation of UMP to UDP. The polypeptide is Uridylate kinase (Thermofilum pendens (strain DSM 2475 / Hrk 5)).